Reading from the N-terminus, the 968-residue chain is Phosphatidylserine decarboxylase 2 proenzyme (968 aa).

The signal sequence occupies residues 1-25; it reads MAKVMRLIIFVCVALVAISVPAASS. Catalysis depends on charge relay system; for autoendoproteolytic cleavage activity residues D500, H570, and S683. The active-site Schiff-base intermediate with substrate; via pyruvic acid; for decarboxylase activity is the S683. A Pyruvic acid (Ser); by autocatalysis modification is found at S683.

It belongs to the phosphatidylserine decarboxylase family. Heterodimer of a large membrane-associated beta subunit and a small pyruvoyl-containing alpha subunit. Pyruvate is required as a cofactor. Post-translationally, is synthesized initially as an inactive proenzyme. Formation of the active enzyme involves a self-maturation process in which the active site pyruvoyl group is generated from an internal serine residue via an autocatalytic post-translational modification. Two non-identical subunits are generated from the proenzyme in this reaction, and the pyruvate is formed at the N-terminus of the alpha chain, which is derived from the carboxyl end of the proenzyme. The autoendoproteolytic cleavage occurs by a canonical serine protease mechanism, in which the side chain hydroxyl group of the serine supplies its oxygen atom to form the C-terminus of the beta chain, while the remainder of the serine residue undergoes an oxidative deamination to produce ammonia and the pyruvoyl prosthetic group on the alpha chain. During this reaction, the Ser that is part of the protease active site of the proenzyme becomes the pyruvoyl prosthetic group, which constitutes an essential element of the active site of the mature decarboxylase.

The protein resides in the parasitophorous vacuole. It is found in the cytoplasmic vesicle. The protein localises to the secretory vesicle. It catalyses the reaction a 1,2-diacyl-sn-glycero-3-phospho-L-serine + H(+) = a 1,2-diacyl-sn-glycero-3-phosphoethanolamine + CO2. Its pathway is phospholipid metabolism; phosphatidylethanolamine biosynthesis; phosphatidylethanolamine from CDP-diacylglycerol: step 2/2. In terms of biological role, catalyzes the formation of phosphatidylethanolamine (PtdEtn) from phosphatidylserine (PtdSer). Plays a central role in phospholipid metabolism and in the interorganelle trafficking of phosphatidylserine. Can act on liposomal and host cell PtdSer. This is Phosphatidylserine decarboxylase 2 proenzyme from Toxoplasma gondii (strain ATCC 50853 / GT1).